The following is a 304-amino-acid chain: UDP-N-acetylenolpyruvoylglucosamine reductase (304 aa).

Residues 33–213 (IGGPADIMVI…LEITRDLTER (181 aa)) enclose the FAD-binding PCMH-type domain. R177 is a catalytic residue. The active-site Proton donor is S227. E297 is an active-site residue.

This sequence belongs to the MurB family. It depends on FAD as a cofactor.

The protein localises to the cytoplasm. It catalyses the reaction UDP-N-acetyl-alpha-D-muramate + NADP(+) = UDP-N-acetyl-3-O-(1-carboxyvinyl)-alpha-D-glucosamine + NADPH + H(+). It participates in cell wall biogenesis; peptidoglycan biosynthesis. Its function is as follows. Cell wall formation. This is UDP-N-acetylenolpyruvoylglucosamine reductase from Alkaliphilus oremlandii (strain OhILAs) (Clostridium oremlandii (strain OhILAs)).